The following is a 277-amino-acid chain: Diaminopimelate epimerase (277 aa).

2 residues coordinate substrate: Asn-11 and Asn-62. Residue Cys-71 is the Proton donor of the active site. Substrate-binding positions include 72-73 (GN), Asn-160, Asn-193, and 211-212 (ER). The active-site Proton acceptor is Cys-220. 221 to 222 (GT) is a binding site for substrate.

It belongs to the diaminopimelate epimerase family. Homodimer.

It is found in the cytoplasm. The enzyme catalyses (2S,6S)-2,6-diaminopimelate = meso-2,6-diaminopimelate. It functions in the pathway amino-acid biosynthesis; L-lysine biosynthesis via DAP pathway; DL-2,6-diaminopimelate from LL-2,6-diaminopimelate: step 1/1. Functionally, catalyzes the stereoinversion of LL-2,6-diaminopimelate (L,L-DAP) to meso-diaminopimelate (meso-DAP), a precursor of L-lysine. This chain is Diaminopimelate epimerase, found in Methanococcus maripaludis (strain C5 / ATCC BAA-1333).